The sequence spans 61 residues: Small ribosomal subunit protein uS14B (61 aa).

Zn(2+) is bound by residues cysteine 24, cysteine 27, cysteine 40, and cysteine 43.

Belongs to the universal ribosomal protein uS14 family. Zinc-binding uS14 subfamily. As to quaternary structure, part of the 30S ribosomal subunit. Contacts proteins S3 and S10. Zn(2+) serves as cofactor.

Binds 16S rRNA, required for the assembly of 30S particles and may also be responsible for determining the conformation of the 16S rRNA at the A site. The polypeptide is Small ribosomal subunit protein uS14B (Mycolicibacterium gilvum (strain PYR-GCK) (Mycobacterium gilvum (strain PYR-GCK))).